Consider the following 307-residue polypeptide: Oxygen-dependent coproporphyrinogen-III oxidase (307 aa).

Ser99 is a substrate binding site. His103 and His113 together coordinate a divalent metal cation. His113 acts as the Proton donor in catalysis. 115-117 (NVR) serves as a coordination point for substrate. His152 and His182 together coordinate a divalent metal cation. Positions 247 to 282 (YVEFNLVFDRGTLFGLQSGGRTESILMSMPPVVNWR) are important for dimerization. A substrate-binding site is contributed by 265–267 (GGR).

It belongs to the aerobic coproporphyrinogen-III oxidase family. As to quaternary structure, homodimer. The cofactor is a divalent metal cation.

The protein resides in the cytoplasm. It catalyses the reaction coproporphyrinogen III + O2 + 2 H(+) = protoporphyrinogen IX + 2 CO2 + 2 H2O. It participates in porphyrin-containing compound metabolism; protoporphyrin-IX biosynthesis; protoporphyrinogen-IX from coproporphyrinogen-III (O2 route): step 1/1. Functionally, involved in the heme biosynthesis. Catalyzes the aerobic oxidative decarboxylation of propionate groups of rings A and B of coproporphyrinogen-III to yield the vinyl groups in protoporphyrinogen-IX. The protein is Oxygen-dependent coproporphyrinogen-III oxidase of Paraburkholderia phytofirmans (strain DSM 17436 / LMG 22146 / PsJN) (Burkholderia phytofirmans).